Consider the following 224-residue polypeptide: Ras-related protein Rab-32C (224 aa).

A disordered region spans residues 1-22; the sequence is MYSNKNDKDKDKDQNNENNKNN. A GTP-binding site is contributed by 35–42; sequence GKLACGKT. The Effector region signature appears at 57-65; sequence YKPTIGVDF. Residues 83-87 and 142-145 contribute to the GTP site; these read DIAGQ and NKCD. The segment at 203-224 is disordered; that stretch reads GFKLSDQSQSTETTPTQSKTCC. Residues 209-224 are compositionally biased toward low complexity; it reads QSQSTETTPTQSKTCC. S-geranylgeranyl cysteine attachment occurs at residues Cys223 and Cys224.

The protein belongs to the small GTPase superfamily. Rab family.

The chain is Ras-related protein Rab-32C (rab32C) from Dictyostelium discoideum (Social amoeba).